The primary structure comprises 453 residues: UPF0210 protein Mbur_0828 (453 aa).

It belongs to the UPF0210 family.

This chain is UPF0210 protein Mbur_0828, found in Methanococcoides burtonii (strain DSM 6242 / NBRC 107633 / OCM 468 / ACE-M).